A 261-amino-acid chain; its full sequence is 5'-nucleotidase SurE (261 aa).

Residues Asp8, Asp9, Ser39, and Asn94 each coordinate a divalent metal cation.

Belongs to the SurE nucleotidase family. A divalent metal cation serves as cofactor.

The protein localises to the cytoplasm. It catalyses the reaction a ribonucleoside 5'-phosphate + H2O = a ribonucleoside + phosphate. Its function is as follows. Nucleotidase that shows phosphatase activity on nucleoside 5'-monophosphates. In Archaeoglobus fulgidus (strain ATCC 49558 / DSM 4304 / JCM 9628 / NBRC 100126 / VC-16), this protein is 5'-nucleotidase SurE.